The sequence spans 63 residues: Large ribosomal subunit protein uL30 (63 aa).

Belongs to the universal ribosomal protein uL30 family. Part of the 50S ribosomal subunit.

The chain is Large ribosomal subunit protein uL30 from Xanthomonas campestris pv. campestris (strain 8004).